Reading from the N-terminus, the 309-residue chain is Malate dehydrogenase (309 aa).

NAD(+) is bound by residues 7-12 (GAGHVG) and D32. Substrate contacts are provided by R81 and R87. NAD(+) is bound by residues N94 and 117–119 (VSN). Substrate contacts are provided by N119 and R150. The Proton acceptor role is filled by H174.

It belongs to the LDH/MDH superfamily. MDH type 3 family.

It catalyses the reaction (S)-malate + NAD(+) = oxaloacetate + NADH + H(+). In terms of biological role, catalyzes the reversible oxidation of malate to oxaloacetate. This is Malate dehydrogenase from Chlorobium phaeovibrioides (strain DSM 265 / 1930) (Prosthecochloris vibrioformis (strain DSM 265)).